Reading from the N-terminus, the 362-residue chain is Anthranilate phosphoribosyltransferase (362 aa).

5-phospho-alpha-D-ribose 1-diphosphate contacts are provided by residues Gly96, 99-100 (GD), Thr104, 106-109 (NIST), 124-132 (KHGNRAASS), and Gly136. Gly96 is an anthranilate binding site. Ser108 lines the Mg(2+) pocket. Asn127 contributes to the anthranilate binding site. Residue Arg182 coordinates anthranilate. Mg(2+)-binding residues include Asp240 and Glu241.

This sequence belongs to the anthranilate phosphoribosyltransferase family. In terms of assembly, homodimer. It depends on Mg(2+) as a cofactor.

The enzyme catalyses N-(5-phospho-beta-D-ribosyl)anthranilate + diphosphate = 5-phospho-alpha-D-ribose 1-diphosphate + anthranilate. It functions in the pathway amino-acid biosynthesis; L-tryptophan biosynthesis; L-tryptophan from chorismate: step 2/5. Its function is as follows. Catalyzes the transfer of the phosphoribosyl group of 5-phosphorylribose-1-pyrophosphate (PRPP) to anthranilate to yield N-(5'-phosphoribosyl)-anthranilate (PRA). The chain is Anthranilate phosphoribosyltransferase from Rhodococcus opacus (strain B4).